Reading from the N-terminus, the 162-residue chain is MKCPFRVGQGFDVHALVPGRALIVGGVDIPFSAGLLGHSDADVLLHALTDALLGAAGLGDIGRLFPDTDPAHAGADSRVLLREAYARVKAAGWEAVNVDATLICRAPRILPHAPAMVVNIAADLGMDAAAINIKGKTTEKLGFTGRGEGIAAQVVALLARAD.

Residues D12 and H14 each contribute to the a divalent metal cation site. 4-CDP-2-C-methyl-D-erythritol 2-phosphate contacts are provided by residues 12–14 (DVH) and 38–39 (HS). Position 46 (H46) interacts with a divalent metal cation. Residues 60–62 (DIG), 65–69 (FPDTD), F143, and R146 contribute to the 4-CDP-2-C-methyl-D-erythritol 2-phosphate site.

It belongs to the IspF family. As to quaternary structure, homotrimer. It depends on a divalent metal cation as a cofactor.

It carries out the reaction 4-CDP-2-C-methyl-D-erythritol 2-phosphate = 2-C-methyl-D-erythritol 2,4-cyclic diphosphate + CMP. The protein operates within isoprenoid biosynthesis; isopentenyl diphosphate biosynthesis via DXP pathway; isopentenyl diphosphate from 1-deoxy-D-xylulose 5-phosphate: step 4/6. Functionally, involved in the biosynthesis of isopentenyl diphosphate (IPP) and dimethylallyl diphosphate (DMAPP), two major building blocks of isoprenoid compounds. Catalyzes the conversion of 4-diphosphocytidyl-2-C-methyl-D-erythritol 2-phosphate (CDP-ME2P) to 2-C-methyl-D-erythritol 2,4-cyclodiphosphate (ME-CPP) with a corresponding release of cytidine 5-monophosphate (CMP). In Azoarcus sp. (strain BH72), this protein is 2-C-methyl-D-erythritol 2,4-cyclodiphosphate synthase.